Here is a 563-residue protein sequence, read N- to C-terminus: MSVLKKNRRKDSDTPQEPSEKAKEQQAEAELRKLRQQFRKMVESRKSFKFRNQQKIASQYKEIKTLKTEQDEITLLLSLMKSSRNMNRSEKNYMELRLLLQTKEDYEALIKSLKVLLAELDEKILQMEKKIANQKQIFAKMQEANNPRKLQKQIHILETRLNLVTVHFDKMLTTNAKLRKEIEDLRFEKAAYDNVYQQLQHCLLMEKKTMNLAIEQSSQAYEQRVEAMARMAAMKDRQKKDTSQYNLEIRELERLYAHESKLKSFLLVKLNDRNEFEEQAKREEALKAKKHVKKNRGESFESYEVAHLRLLKLAESGNLNQLIEDFLAKEEKNFARFTYVTELNNDMEMMHKRTQRIQDEIILLRSQQKLSHDDNHSVLRQLEDKLRKTTEEADMYESKYGEVSKTLDLLKNSVEKLFKKINCDATKILVQLGETGKVTDINLPQYFAIIEKKTNDLLLLETYRRILEVEGAEAEIPPPFINPFWGGSALLKPPEPIKVIPPVLGADPFSDRLDDVEQPLDHSSLRQLVLDNYILKENRSKEVRGDSLPEKVDDFRSRKKVTM.

Positions 1 to 29 are disordered; that stretch reads MSVLKKNRRKDSDTPQEPSEKAKEQQAEA. Basic and acidic residues predominate over residues 10-29; it reads KDSDTPQEPSEKAKEQQAEA. Coiled coils occupy residues 18-201, 233-291, and 341-422; these read PSEK…QLQH, AMKD…AKKH, and TELN…KKIN.

Functionally, plays a role in spermiogenesis. Involved in the elongation of flagella and the formation of sperm heads. The sequence is that of Coiled-coil domain-containing protein 63 from Homo sapiens (Human).